Reading from the N-terminus, the 1183-residue chain is Phospholipid-transporting ATPase FetA (1183 aa).

Transmembrane regions (helical) follow at residues 96–116, 299–319, and 348–368; these read ISSL…SITG, VLVV…SIGH, and ALIF…SLYV. The active-site 4-aspartylphosphate intermediate is the D416. ATP-binding residues include D416, K417, T418, E519, F560, K583, R617, T697, G698, D699, R812, and K818. D416 contributes to the Mg(2+) binding site. Position 418 (T418) interacts with Mg(2+). D838 lines the Mg(2+) pocket. Residues N841 and D842 each contribute to the ATP site. D842 contacts Mg(2+). 6 consecutive transmembrane segments (helical) span residues 904–924, 927–947, 981–1001, 1014–1034, 1049–1069, and 1090–1110; these read FAFT…AQTV, IWFI…GLSL, CLLH…GTVF, FQSF…MQIA, WGSL…GLCL, and IWLC…GYNF.

The protein belongs to the cation transport ATPase (P-type) (TC 3.A.3) family. Type IV subfamily. Requires Mg(2+) as cofactor. In terms of tissue distribution, highly expressed in testis.

The protein resides in the cytoplasmic vesicle. Its subcellular location is the secretory vesicle. It localises to the acrosome membrane. The enzyme catalyses ATP + H2O + phospholipidSide 1 = ADP + phosphate + phospholipidSide 2.. In terms of biological role, P4-ATPase flippase which catalyzes the hydrolysis of ATP coupled to the transport of aminophospholipids from the outer to the inner leaflet of various membranes and ensures the maintenance of asymmetric distribution of phospholipids. Phospholipid translocation also seems to be implicated in vesicle formation and in uptake of lipid signaling molecules. May play a role in phospholid transport across membranes and in acrosome formation. This is Phospholipid-transporting ATPase FetA (Atp8b5) from Mus musculus (Mouse).